The sequence spans 229 residues: Cilia- and flagella-associated protein 95 (229 aa).

The Extracellular segment spans residues 1-123; sequence MDSLDRSCQD…LLNEETVSSG (123 aa). Asn75 carries an N-linked (GlcNAc...) asparagine glycan. Residues 124–140 traverse the membrane as a helical segment; the sequence is IIERVTGLPATGFGAVF. Over 141 to 229 the chain is Cytoplasmic; sequence PRHPPDWSKM…PLTSGPIVPI (89 aa). The segment at 153-163 is mn; it reads LTTYSEDYVPP.

Microtubule inner protein component of sperm flagellar doublet microtubules. Interacts with MYH9. Interacts with MYH10. As to expression, expressed in undifferentiated embryonic stem cells. Expressed in airway epithelial cells.

The protein localises to the cytoplasm. It is found in the cytoskeleton. Its subcellular location is the cilium axoneme. It localises to the flagellum axoneme. The protein resides in the cell membrane. Functionally, microtubule inner protein (MIP) part of the dynein-decorated doublet microtubules (DMTs) in cilia axoneme, which is required for motile cilia beating. In Homo sapiens (Human), this protein is Cilia- and flagella-associated protein 95.